The following is a 102-amino-acid chain: Citrate lyase acyl carrier protein (102 aa).

An O-(phosphoribosyl dephospho-coenzyme A)serine modification is found at Ser-14.

This sequence belongs to the CitD family. In terms of assembly, oligomer with a subunit composition of (alpha,beta,gamma)6.

It localises to the cytoplasm. Covalent carrier of the coenzyme of citrate lyase. This chain is Citrate lyase acyl carrier protein, found in Streptococcus equi subsp. zooepidemicus (strain H70).